Here is a 493-residue protein sequence, read N- to C-terminus: Ribosomal protein uS12 methylthiotransferase RimO (493 aa).

An MTTase N-terminal domain is found at 5-121 (RTVALVTLGC…ISDRLQTILN (117 aa)). Residues cysteine 14, cysteine 50, cysteine 84, cysteine 198, cysteine 202, and cysteine 205 each coordinate [4Fe-4S] cluster. Residues 184 to 415 (LGTSPVASVK…QLAEELTSQR (232 aa)) form the Radical SAM core domain. The TRAM domain maps to 417–487 (EERVGETLQV…GVDLVAEHHE (71 aa)).

The protein belongs to the methylthiotransferase family. RimO subfamily. It depends on [4Fe-4S] cluster as a cofactor.

The protein localises to the cytoplasm. It carries out the reaction L-aspartate(89)-[ribosomal protein uS12]-hydrogen + (sulfur carrier)-SH + AH2 + 2 S-adenosyl-L-methionine = 3-methylsulfanyl-L-aspartate(89)-[ribosomal protein uS12]-hydrogen + (sulfur carrier)-H + 5'-deoxyadenosine + L-methionine + A + S-adenosyl-L-homocysteine + 2 H(+). Catalyzes the methylthiolation of an aspartic acid residue of ribosomal protein uS12. The protein is Ribosomal protein uS12 methylthiotransferase RimO of Streptomyces griseus subsp. griseus (strain JCM 4626 / CBS 651.72 / NBRC 13350 / KCC S-0626 / ISP 5235).